The sequence spans 210 residues: Dephospho-CoA kinase (210 aa).

The region spanning 18 to 210 (RIGITGGIAS…LSYPQVEVLL (193 aa)) is the DPCK domain. 26–31 (ASGKTS) is an ATP binding site.

Belongs to the CoaE family.

The protein resides in the cytoplasm. The catalysed reaction is 3'-dephospho-CoA + ATP = ADP + CoA + H(+). It participates in cofactor biosynthesis; coenzyme A biosynthesis; CoA from (R)-pantothenate: step 5/5. Its function is as follows. Catalyzes the phosphorylation of the 3'-hydroxyl group of dephosphocoenzyme A to form coenzyme A. The protein is Dephospho-CoA kinase of Prochlorococcus marinus (strain SARG / CCMP1375 / SS120).